A 188-amino-acid polypeptide reads, in one-letter code: uncharacterized protein (188 aa).

It is found in the plastid. Its subcellular location is the cyanelle. This is an uncharacterized protein from Cyanophora paradoxa.